The primary structure comprises 106 residues: NADH dehydrogenase [ubiquinone] 1 beta subcomplex subunit 10-B (106 aa).

Positions 1–25 (MGRKKGLPEFEESAPDGFDPENPYK) are disordered.

The protein belongs to the complex I NDUFB10 subunit family. As to quaternary structure, complex I is composed of at least 49 different subunits.

The protein localises to the mitochondrion inner membrane. Accessory subunit of the mitochondrial membrane respiratory chain NADH dehydrogenase (Complex I), that is believed not to be involved in catalysis. Complex I functions in the transfer of electrons from NADH to the respiratory chain. The immediate electron acceptor for the enzyme is believed to be ubiquinone. The sequence is that of NADH dehydrogenase [ubiquinone] 1 beta subcomplex subunit 10-B from Arabidopsis thaliana (Mouse-ear cress).